Reading from the N-terminus, the 536-residue chain is Methyl-accepting chemotaxis aspartate transducer (536 aa).

At 1-10 the chain is on the cytoplasmic side; that stretch reads MFNRIRISTS. The helical transmembrane segment at 11–31 threads the bilayer; the sequence is LFLLLISFCIMQLISTGLSYV. At 32 to 188 the chain is on the periplasmic side; the sequence is ALRADNHNLE…ASSQQAYGWS (157 aa). A the 3 Arg may form a positively charged pocket, which binds the alpha-carboxyl group of the attractant AA region spans residues 64–73; sequence RNTLNRAGTR. A helical membrane pass occupies residues 189 to 209; that stretch reads IWLVAGAVLMLLVVTLSAMWW. Residues 210–536 are Cytoplasmic-facing; sequence LRTMLVQPLN…VKETLDCQTA (327 aa). Positions 212–264 constitute an HAMP domain; the sequence is TMLVQPLNIIRGHFERIASGDLSAPIEVYGRNEISQLFASLQRMQQSLIGTVG. One can recognise a Methyl-accepting transducer domain in the interval 269-498; that stretch reads GAESILIGLQ…ESASAAAALE (230 aa). Position 293 is a glutamate methyl ester (Gln) (Gln-293). A Glutamate methyl ester (Glu) modification is found at Glu-300. Glutamate methyl ester (Gln) is present on Gln-307. A glutamate methyl ester (Glu) mark is found at Glu-489 and Glu-498.

The protein belongs to the methyl-accepting chemotaxis (MCP) protein family.

It is found in the cell inner membrane. Its function is as follows. This protein responds to changes in Asp concentration in the environment, transduces a signal from the outside to the inside of the cell, and facilitates sensory adaptation through various levels of methylation. Functionally, chemotactic-signal transducers respond to changes in the concentration of attractants and repellents in the environment, transduce a signal from the outside to the inside of the cell, and facilitate sensory adaptation through the variation of the level of methylation. Attractants increase the level of methylation while repellents decrease the level of methylation, the methyl groups are added by the methyltransferase CheR and removed by the methylesterase CheB. The polypeptide is Methyl-accepting chemotaxis aspartate transducer (tas) (Klebsiella aerogenes (strain ATCC 13048 / DSM 30053 / CCUG 1429 / JCM 1235 / KCTC 2190 / NBRC 13534 / NCIMB 10102 / NCTC 10006 / CDC 819-56) (Enterobacter aerogenes)).